We begin with the raw amino-acid sequence, 303 residues long: tRNA pseudouridine synthase A (303 aa).

Asp59 (nucleophile) is an active-site residue. Residue Tyr128 coordinates substrate.

The protein belongs to the tRNA pseudouridine synthase TruA family. Homodimer.

The enzyme catalyses uridine(38/39/40) in tRNA = pseudouridine(38/39/40) in tRNA. Formation of pseudouridine at positions 38, 39 and 40 in the anticodon stem and loop of transfer RNAs. This Bifidobacterium longum (strain DJO10A) protein is tRNA pseudouridine synthase A.